A 718-amino-acid polypeptide reads, in one-letter code: Sodium/myo-inositol cotransporter (718 aa).

At 1 to 9 (MRAVLEAAD) the chain is on the extracellular side. The helical transmembrane segment at 10–29 (IAVVALYFILVMCIGFFAMW) threads the bilayer. The Cytoplasmic segment spans residues 30-38 (KSNRSTVSG). Residues 39–57 (YFLAGRSMTWVAIGASLFV) form a helical membrane-spanning segment. Residues 58 to 86 (SNIGSEHFIGLAGSGAASGFAVGAWEFNA) are Extracellular-facing. Residues 87 to 110 (LLLLQLLGWVFIPIYIRSGVYTMP) traverse the membrane as a helical segment. The Cytoplasmic portion of the chain corresponds to 111–123 (EYLSKRFGGHRIQ). The helical transmembrane segment at 124 to 144 (VYFAALSLLLYIFTKLSVDLY) threads the bilayer. Topologically, residues 145–157 (SGALFIQESLGWN) are extracellular. A helical transmembrane segment spans residues 158–183 (LYVSVILLIGMTALLTVTGGLVAVIY). Topologically, residues 184–186 (TDT) are cytoplasmic. Residues 187-205 (LQALLMIIGALTLMVISMV) traverse the membrane as a helical segment. At 206 to 303 (KIGGFEEVKR…HAKGSTLMAG (98 aa)) the chain is on the extracellular side. Asn-232 is a glycosylation site (N-linked (GlcNAc...) asparagine). A helical transmembrane segment spans residues 304–324 (FLKLLPMFIIVVPGMISRIVF). At 325–353 (ADEIACINPEHCMQVCGSRAGCSNIAYPR) the chain is on the cytoplasmic side. The chain crosses the membrane as a helical span at residues 354–376 (LVMTLVPVGLRGLMMAVMIAALM). Topologically, residues 377 to 406 (SDLDSIFNSASTIFTLDVYKLIRKSASSRE) are extracellular. A helical membrane pass occupies residues 407–430 (LMIVGRIFVAFMVVISIAWVPIIV). The Cytoplasmic portion of the chain corresponds to 431 to 443 (EMQGGQMYLYIQE). A helical transmembrane segment spans residues 444-462 (VADYLTPPVAALFLLAIFW). The Extracellular portion of the chain corresponds to 463-510 (KRCNEQGAFYGGMAGFVLGAVRLILAFTYRAPECDQPDNRPGFIKDIH). Residues 511–532 (YMYVATALFWITGLITVIVSLL) form a helical membrane-spanning segment. Topologically, residues 533 to 695 (TPPPTKDQIR…QMLEETPQVK (163 aa)) are cytoplasmic. 2 positions are modified to phosphoserine: Ser-594 and Ser-632. Residues 696-716 (VILNIGLFAVCSLGIFMFVYF) traverse the membrane as a helical segment. Residues 717 to 718 (SL) lie on the Extracellular side of the membrane.

The protein belongs to the sodium:solute symporter (SSF) (TC 2.A.21) family. In terms of assembly, interacts with KCNQ2 (via the pore module). Interacts with KCNQ1; this interaction is direct. Forms coregulatory complexes with ion channels KCNQ2-KCNQ3 and KCNQ1-KCNE2. Highly expressed in kidney, placenta, and brain and at a lesser extent in thymus, lung, bladder, and testes. Expressed in the choroid plexus epithelium (at protein level).

The protein resides in the apical cell membrane. It is found in the basolateral cell membrane. It carries out the reaction myo-inositol(out) + 2 Na(+)(out) = myo-inositol(in) + 2 Na(+)(in). The catalysed reaction is scyllo-inositol(out) + 2 Na(+)(out) = scyllo-inositol(in) + 2 Na(+)(in). Functionally, electrogenic Na(+)-coupled sugar symporter that actively transports myo-inositol and its stereoisomer scyllo-inositol across the plasma membrane, with a Na(+) to sugar coupling ratio of 2:1. Maintains myo-inositol concentration gradient that defines cell volume and fluid balance during osmotic stress, in particular in the fetoplacental unit and central nervous system. Forms coregulatory complexes with voltage-gated K(+) ion channels, allosterically altering ion selectivity, voltage dependence and gating kinetics of the channel. In turn, K(+) efflux through the channel forms a local electrical gradient that modulates electrogenic Na(+)-coupled myo-inositol influx through the transporter. Associates with KCNQ1-KCNE2 channel in the apical membrane of choroid plexus epithelium and regulates the myo-inositol gradient between blood and cerebrospinal fluid with an impact on neuron excitability. Associates with KCNQ2-KCNQ3 channel altering ion selectivity, increasing Na(+) and Cs(+) permeation relative to K(+) permeation. Provides myo-inositol precursor for biosynthesis of phosphoinositides such as PI(4,5)P2, thus indirectly affecting the activity of phosphoinositide-dependent ion channels and Ca(2+) signaling upon osmotic stress. (Microbial infection) Functions as a retroviral receptor for M813 murine leukemia virus (MuLV) entry. In Mus musculus (Mouse), this protein is Sodium/myo-inositol cotransporter (Slc5a3).